Reading from the N-terminus, the 281-residue chain is 2,3,4,5-tetrahydropyridine-2,6-dicarboxylate N-succinyltransferase (281 aa).

The substrate site is built by R108 and D145.

It belongs to the transferase hexapeptide repeat family. Homotrimer.

It localises to the cytoplasm. The catalysed reaction is (S)-2,3,4,5-tetrahydrodipicolinate + succinyl-CoA + H2O = (S)-2-succinylamino-6-oxoheptanedioate + CoA. The protein operates within amino-acid biosynthesis; L-lysine biosynthesis via DAP pathway; LL-2,6-diaminopimelate from (S)-tetrahydrodipicolinate (succinylase route): step 1/3. In Bradyrhizobium diazoefficiens (strain JCM 10833 / BCRC 13528 / IAM 13628 / NBRC 14792 / USDA 110), this protein is 2,3,4,5-tetrahydropyridine-2,6-dicarboxylate N-succinyltransferase.